The primary structure comprises 280 residues: Vitamin B12-binding protein (280 aa).

The N-terminal stretch at 1–27 (MMPLGLFPLPRAAAVLLISLLTLPAQA) is a signal peptide. In terms of domain architecture, Fe/B12 periplasmic-binding spans 30 to 277 (RVISLSPSTT…QMASIPTPVA (248 aa)). Residue Y57 coordinates cyanocob(III)alamin. C190 and C266 are disulfide-bonded.

Belongs to the BtuF family. As to quaternary structure, the complex is composed of two ATP-binding proteins (BtuD), two transmembrane proteins (BtuC) and a solute-binding protein (BtuF).

Its subcellular location is the periplasm. In terms of biological role, part of the ABC transporter complex BtuCDF involved in vitamin B12 import. Binds vitamin B12 and delivers it to the periplasmic surface of BtuC. This Yersinia pseudotuberculosis serotype O:3 (strain YPIII) protein is Vitamin B12-binding protein.